A 631-amino-acid polypeptide reads, in one-letter code: tRNA 5-methylaminomethyl-2-thiouridine biosynthesis bifunctional protein MnmC (631 aa).

Residues 1–243 (MITDLRPPAM…KREMLTGRLP (243 aa)) form a tRNA (mnm(5)s(2)U34)-methyltransferase region. The segment at 261 to 631 (IGAGIAGAAL…GRLYRNQLTV (371 aa)) is FAD-dependent cmnm(5)s(2)U34 oxidoreductase.

This sequence in the N-terminal section; belongs to the methyltransferase superfamily. tRNA (mnm(5)s(2)U34)-methyltransferase family. The protein in the C-terminal section; belongs to the DAO family. The cofactor is FAD.

It localises to the cytoplasm. It catalyses the reaction 5-aminomethyl-2-thiouridine(34) in tRNA + S-adenosyl-L-methionine = 5-methylaminomethyl-2-thiouridine(34) in tRNA + S-adenosyl-L-homocysteine + H(+). In terms of biological role, catalyzes the last two steps in the biosynthesis of 5-methylaminomethyl-2-thiouridine (mnm(5)s(2)U) at the wobble position (U34) in tRNA. Catalyzes the FAD-dependent demodification of cmnm(5)s(2)U34 to nm(5)s(2)U34, followed by the transfer of a methyl group from S-adenosyl-L-methionine to nm(5)s(2)U34, to form mnm(5)s(2)U34. This chain is tRNA 5-methylaminomethyl-2-thiouridine biosynthesis bifunctional protein MnmC, found in Marinobacter nauticus (strain ATCC 700491 / DSM 11845 / VT8) (Marinobacter aquaeolei).